The chain runs to 207 residues: ATP-dependent Clp protease proteolytic subunit (207 aa).

The Nucleophile role is filled by S111. H136 is an active-site residue.

The protein belongs to the peptidase S14 family. In terms of assembly, fourteen ClpP subunits assemble into 2 heptameric rings which stack back to back to give a disk-like structure with a central cavity, resembling the structure of eukaryotic proteasomes.

The protein resides in the cytoplasm. The enzyme catalyses Hydrolysis of proteins to small peptides in the presence of ATP and magnesium. alpha-casein is the usual test substrate. In the absence of ATP, only oligopeptides shorter than five residues are hydrolyzed (such as succinyl-Leu-Tyr-|-NHMec, and Leu-Tyr-Leu-|-Tyr-Trp, in which cleavage of the -Tyr-|-Leu- and -Tyr-|-Trp bonds also occurs).. Functionally, cleaves peptides in various proteins in a process that requires ATP hydrolysis. Has a chymotrypsin-like activity. Plays a major role in the degradation of misfolded proteins. The chain is ATP-dependent Clp protease proteolytic subunit from Psychromonas ingrahamii (strain DSM 17664 / CCUG 51855 / 37).